The sequence spans 86 residues: Small ribosomal subunit protein bS20 (86 aa).

Positions Met-1–Met-27 are enriched in basic residues. Residues Met-1–Met-28 form a disordered region.

It belongs to the bacterial ribosomal protein bS20 family.

In terms of biological role, binds directly to 16S ribosomal RNA. The sequence is that of Small ribosomal subunit protein bS20 from Proteus mirabilis (strain HI4320).